The chain runs to 803 residues: MDDLQEIMEDFLIEAFEMNEQLDQDLVELEHNPEDLDLLNRIFRVAHTIKGSSSFLNLNILTHLTHNMEDVLNRARKGEIKITPDIMDVVLRSIDLMKTLLVTIRDTGSDTNNGKENEIEEAVKQLQAITSQNLESAKERTTEAPQKENKEETKEEAKEENKENKAKAPTAENTSSDNPLADEPDLDYANMSAEEVEAEIERLLNKRQEADKERRAQKKQEAKPKQEVTPTKETPKAPKTETKAKAKADTEENKAPSIGVEQTVRVDVRRLDHLMNLIGELVLGKNRLIRIYSDVEERYDGEKFLEELNQVVSSISAVTTDLQLAVMKTRMQPVGKVFNKFPRMVRDLSRELGKSIELIIEGEETELDKSIVEEIGDPLIHIIRNSCDHGIEPLEERRKLNKPETGKVQLSAYNEGNHIVIKISDDGKGLDPVMLKEKAIEKGVISERDAEGMSDREAFNLIFKPGFSTAKVVSNVSGRGVGMDVVKTNIEKLNGIIEIDSEVGVGTTQKLKIPLTLAIIQALLVGVQEEYYAIPLSSVLETVRISQDEIYTVDGKSVLRLRDEVLSLVRLSDIFKVDAILESNSDVYVVIIGLADQKIGVIVDYLIGQEEVVIKSLGYYLKNTRGIAGATVRGDGKITLIVDVGAMMDMAKSIKVNITTLMNESENTKSKNSPSDYIVLAIDDSSTDRAIIRKCLKPLGITLLEATNGLEGLEMLKNGDKIPDAILVDIEMPKMDGYTFASEVRKYNKFKNLPLIAVTSRVTKTDRMRGVESGMTEYITKPYSGEYLTTVVKRSIKLEGDQS.

Histidine 47 is subject to Phosphohistidine. 2 disordered regions span residues 134–185 and 209–255; these read LESA…DEPD and EADK…ENKA. 3 stretches are compositionally biased toward basic and acidic residues: residues 136 to 166, 209 to 226, and 233 to 254; these read SAKE…ENKA, EADK…KPKQ, and ETPK…EENK. Residues 270 to 517 enclose the Histidine kinase domain; it reads RLDHLMNLIG…TQKLKIPLTL (248 aa). Histidine 273 carries the phosphohistidine; by autocatalysis modification. A CheW-like domain is found at 519-653; sequence IIQALLVGVQ…VGAMMDMAKS (135 aa). One can recognise a Response regulatory domain in the interval 678-796; sequence IVLAIDDSST…YLTTVVKRSI (119 aa). Aspartate 729 bears the 4-aspartylphosphate mark.

Autophosphorylated.

The enzyme catalyses ATP + protein L-histidine = ADP + protein N-phospho-L-histidine.. Member of the two-component regulatory system CheAY/CheY that regulates chemotaxis and colonization of the gastric mucosa. Functions as a sensor protein kinase which is autophosphorylated at a histidine residue and transfers its phosphate group to the conserved aspartic acid residue in the regulatory domain of CheY. In turn, phosphorylated CheY (CheY-P) interacts with the flagellar motor protein FliM to cause clockwise flagellar rotation and bacterial reversals, as opposed to straight swimming when CheY is not phosphorylated. The protein is Sensor histidine kinase CheAY (cheAY) of Helicobacter pylori (strain ATCC 700392 / 26695) (Campylobacter pylori).